Here is a 388-residue protein sequence, read N- to C-terminus: uncharacterized protein (388 aa).

The next 8 helical transmembrane spans lie at 15-37 (VISA…LLVL), 97-119 (GFSK…VVFY), 129-151 (PIWG…TFLL), 158-175 (FIYI…FLSA), 179-196 (MMLA…VLFK), 203-225 (LAFW…YLSQ), 304-326 (IFIV…YIYF), and 347-369 (LLSV…DALL).

It localises to the cell membrane. This is an uncharacterized protein from Aquifex aeolicus (strain VF5).